A 126-amino-acid chain; its full sequence is uncharacterized protein (126 aa).

Residues 5 to 25 (LIQHITSIFVFSFFFLFFFFS) form a helical membrane-spanning segment.

The protein resides in the membrane. This is an uncharacterized protein from Saccharomyces cerevisiae (strain ATCC 204508 / S288c) (Baker's yeast).